A 267-amino-acid polypeptide reads, in one-letter code: Indole-3-glycerol phosphate synthase (267 aa).

The protein belongs to the TrpC family.

The catalysed reaction is 1-(2-carboxyphenylamino)-1-deoxy-D-ribulose 5-phosphate + H(+) = (1S,2R)-1-C-(indol-3-yl)glycerol 3-phosphate + CO2 + H2O. It participates in amino-acid biosynthesis; L-tryptophan biosynthesis; L-tryptophan from chorismate: step 4/5. This is Indole-3-glycerol phosphate synthase from Polynucleobacter necessarius subsp. necessarius (strain STIR1).